A 123-amino-acid polypeptide reads, in one-letter code: WAP four-disulfide core domain protein 5 (123 aa).

An N-terminal signal peptide occupies residues 1–24; that stretch reads MRIQSLLLLGALLAVGSQLPAVFG. WAP domains lie at 27–73 and 74–121; these read KGEK…CVPR and VSVK…RDPA. Cystine bridges form between cysteine 34-cysteine 62, cysteine 41-cysteine 66, cysteine 49-cysteine 61, cysteine 55-cysteine 70, cysteine 81-cysteine 109, cysteine 88-cysteine 113, cysteine 96-cysteine 108, and cysteine 102-cysteine 117.

It is found in the secreted. Functionally, putative acid-stable proteinase inhibitor. This chain is WAP four-disulfide core domain protein 5 (WFDC5), found in Pongo abelii (Sumatran orangutan).